A 93-amino-acid polypeptide reads, in one-letter code: Auxin-responsive protein SAUR26 (93 aa).

It belongs to the ARG7 family. Interacts with PP2C-D1. As to expression, higher expression in thermo-responsive cultivars (e.g. cv. Alst-1, cv. Ang-0 and cv. Com-0) than in low thermo-responsive cultivars (e.g. cv. Dja-1, cv. El-0 and cv. Kon).

The protein localises to the cell membrane. In terms of biological role, provide a mechanistic link between auxin and plasma membrane H(+)-ATPases (PM H(+)-ATPases, e.g. AHA1 and AHA2), and triggers PM H(+)-ATPases activity by promoting phosphorylation of their C-terminal autoinhibitory domain as a result of PP2C-D subfamily of type 2C phosphatases inhibition, thus leading to the acidification of the apoplast and the facilitation of solutes and water uptake to drive cell expansion. Functions as a positive effectors of cell expansion through modulation of auxin transport. Involved in thermo-responsiveness of plant architecture. Enhances plasma membrane H(+)-ATPase. Probably involved in light intensity mediated root development. The protein is Auxin-responsive protein SAUR26 of Arabidopsis thaliana (Mouse-ear cress).